The chain runs to 86 residues: Large ribosomal subunit protein bL31B (86 aa).

Belongs to the bacterial ribosomal protein bL31 family. Type B subfamily. As to quaternary structure, part of the 50S ribosomal subunit.

This is Large ribosomal subunit protein bL31B from Yersinia enterocolitica serotype O:8 / biotype 1B (strain NCTC 13174 / 8081).